The following is a 324-amino-acid chain: Calpain-2 catalytic subunit (324 aa).

Residues 1–138 (YPNTFWMNPQ…KKADYQVVDD (138 aa)) are domain III. The tract at residues 139 to 153 (EIEADLEENDASEDD) is linker. The domain IV stretch occupies residues 158–324 (FRRLFAQLAG…LISWLCFSVL (167 aa)). Ca(2+) is bound by residues Ala-166, Asp-169, Glu-171, Glu-176, Asp-209, Asp-211, Ser-213, Lys-215, Glu-220, Asp-239, Asp-241, Ser-243, Thr-245, Glu-250, Asp-282, and Asn-285. 2 EF-hand domains span residues 190-224 (DIKS…FYIL) and 226-261 (TKIQ…AGFK).

Belongs to the peptidase C2 family. In terms of assembly, forms a heterodimer with a small (regulatory) subunit (CAPNS1). Interacts with CPEB3; this leads to cleavage of CPEB3. Requires Ca(2+) as cofactor. In terms of tissue distribution, ubiquitous.

Its subcellular location is the cytoplasm. The protein resides in the cell membrane. The enzyme catalyses Broad endopeptidase specificity.. Activated by 200-1000 micromolar concentrations of calcium and inhibited by calpastatin. In terms of biological role, calcium-regulated non-lysosomal thiol-protease which catalyzes limited proteolysis of substrates involved in cytoskeletal remodeling and signal transduction. Proteolytically cleaves MYOC at 'Arg-226'. Proteolytically cleaves CPEB3 following neuronal stimulation which abolishes CPEB3 translational repressor activity, leading to translation of CPEB3 target mRNAs. This Sus scrofa (Pig) protein is Calpain-2 catalytic subunit (CAPN2).